A 920-amino-acid polypeptide reads, in one-letter code: Plasma membrane ATPase (920 aa).

The segment at 1 to 77 (MADHSASGAP…TPGGGRVVPE (77 aa)) is disordered. Topologically, residues 1-115 (MADHSASGAP…KEEKENHFLK (115 aa)) are cytoplasmic. The segment covering 38 to 51 (EDDEDEDIDALIED) has biased composition (acidic residues). A helical transmembrane segment spans residues 116–138 (FLGFFVGPIQFVMEGAAVLAAGL). Topologically, residues 139 to 140 (ED) are extracellular. A helical membrane pass occupies residues 141 to 160 (WVDFGVICGLLLLNAVVGFV). The Cytoplasmic segment spans residues 161–291 (QEFQAGSIVD…GSGHFTEVLN (131 aa)). The helical transmembrane segment at 292–314 (GIGTILLILVIFTLLIVWVSSFY) threads the bilayer. The Extracellular segment spans residues 315 to 321 (RSNPIVQ). Residues 322–354 (ILEFTLAITIIGVPVGLPAVVTTTMAVGAAYLA) form a helical membrane-spanning segment. The Cytoplasmic portion of the chain corresponds to 355 to 687 (KKKAIVQKLS…LKTSRQIFHR (333 aa)). Asp-378 (4-aspartylphosphate intermediate) is an active-site residue. Asp-634 and Asp-638 together coordinate Mg(2+). Residues 688–713 (MYAYVVYRIALSIHLEIFLGLWIAIL) form a helical membrane-spanning segment. The Extracellular portion of the chain corresponds to 714–720 (NRSLNIE). Residues 721–738 (LVVFIAIFADVATLAIAY) traverse the membrane as a helical segment. Residues 739-754 (DNAPYSQTPVKWNLPK) lie on the Cytoplasmic side of the membrane. A helical membrane pass occupies residues 755–779 (LWGMSVLLGVVLAVGTWITVTTMYA). Residues 780–806 (QGENGGIVQNFGNMDEVLFLQISLTEN) are Extracellular-facing. A run of 2 helical transmembrane segments spans residues 807 to 826 (WLIF…PSWQ) and 827 to 847 (LSGA…WGWF). The Extracellular segment spans residues 848-853 (EHSDTS). A helical membrane pass occupies residues 854 to 878 (IVAVVRIWIFSFGIFCIMGGVYYIL). Residues 879–920 (QDSVGFDNLMHGKSPKGNQKQRSLEDFVVSLQRVSTQHEKSQ) are Cytoplasmic-facing.

Belongs to the cation transport ATPase (P-type) (TC 3.A.3) family. Type IIIA subfamily.

Its subcellular location is the cell membrane. It catalyses the reaction ATP + H2O + H(+)(in) = ADP + phosphate + 2 H(+)(out). The plasma membrane ATPase of plants and fungi is a hydrogen ion pump. The proton gradient it generates drives the active transport of nutrients by H(+)-symport. The resulting external acidification and/or internal alkinization may mediate growth responses. The polypeptide is Plasma membrane ATPase (pma-1) (Neurospora crassa (strain ATCC 24698 / 74-OR23-1A / CBS 708.71 / DSM 1257 / FGSC 987)).